Here is a 243-residue protein sequence, read N- to C-terminus: Interleukin-27 subunit alpha (243 aa).

The first 28 residues, 1–28 (MGQTAGDLGWRLSLLLLPLLLVQAGVWG), serve as a signal peptide directing secretion.

This sequence belongs to the IL-6 superfamily. As to quaternary structure, heterodimer with EBI3; not disulfide-linked. This heterodimer is known as interleukin IL-27. In terms of processing, O-glycosylated. As to expression, expressed in monocytes and in placenta.

It localises to the secreted. Associates with EBI3 to form the IL-27 interleukin, a heterodimeric cytokine which functions in innate immunity. IL-27 has pro- and anti-inflammatory properties, that can regulate T-helper cell development, suppress T-cell proliferation, stimulate cytotoxic T-cell activity, induce isotype switching in B-cells, and that has diverse effects on innate immune cells. Among its target cells are CD4 T-helper cells which can differentiate in type 1 effector cells (TH1), type 2 effector cells (TH2) and IL17 producing helper T-cells (TH17). It drives rapid clonal expansion of naive but not memory CD4 T-cells. It also strongly synergizes with IL-12 to trigger interferon-gamma/IFN-gamma production of naive CD4 T-cells, binds to the cytokine receptor WSX-1/TCCR which appears to be required but not sufficient for IL-27-mediated signal transduction. IL-27 potentiate the early phase of TH1 response and suppress TH2 and TH17 differentiation. It induces the differentiation of TH1 cells via two distinct pathways, p38 MAPK/TBX21- and ICAM1/ITGAL/ERK-dependent pathways. It also induces STAT1, STAT3, STAT4 and STAT5 phosphorylation and activates TBX21/T-Bet via STAT1 with resulting IL12RB2 up-regulation, an event crucial to TH1 cell commitment. It suppresses the expression of GATA3, the inhibitor TH1 cells development. In CD8 T-cells, it activates STATs as well as GZMB. IL-27 reveals to be a potent inhibitor of TH17 cell development and of IL-17 production. Indeed IL27 alone is also able to inhibit the production of IL17 by CD4 and CD8 T-cells. While IL-27 suppressed the development of pro-inflammatory Th17 cells via STAT1, it inhibits the development of anti-inflammatory inducible regulatory T-cells, iTreg, independently of STAT1. IL-27 also has an effect on cytokine production, it suppresses pro-inflammatory cytokine production such as IL2, IL4, IL5 and IL6 and activates suppressors of cytokine signaling such as SOCS1 and SOCS3. Apart from suppression of cytokine production, IL-27 also antagonizes the effects of some cytokines such as IL6 through direct effects on T-cells. Another important role of IL-27 is its antitumor activity as well as its antiangiogenic activity with activation of production of antiangiogenic chemokines such as IP-10/CXCL10 and MIG/CXCL9. In vein endothelial cells, it induces IRF1/interferon regulatory factor 1 and increase the expression of MHC class II transactivator/CIITA with resulting up-regulation of major histocompatibility complex class II. IL-27 also demonstrates antiviral activity with inhibitory properties on HIV-1 replication. The chain is Interleukin-27 subunit alpha (IL27) from Homo sapiens (Human).